The chain runs to 141 residues: ATP synthase epsilon chain (141 aa).

The protein belongs to the ATPase epsilon chain family. As to quaternary structure, F-type ATPases have 2 components, CF(1) - the catalytic core - and CF(0) - the membrane proton channel. CF(1) has five subunits: alpha(3), beta(3), gamma(1), delta(1), epsilon(1). CF(0) has three main subunits: a, b and c.

It is found in the cell inner membrane. In terms of biological role, produces ATP from ADP in the presence of a proton gradient across the membrane. The polypeptide is ATP synthase epsilon chain (Azoarcus sp. (strain BH72)).